Here is a 567-residue protein sequence, read N- to C-terminus: Dihydroxy-acid dehydratase (567 aa).

Cys-57 serves as a coordination point for [2Fe-2S] cluster. Residue Asp-89 coordinates Mg(2+). Cys-130 lines the [2Fe-2S] cluster pocket. Residues Asp-131 and Lys-132 each coordinate Mg(2+). Lys-132 is subject to N6-carboxylysine. Cys-202 contacts [2Fe-2S] cluster. Glu-453 serves as a coordination point for Mg(2+). Catalysis depends on Ser-479, which acts as the Proton acceptor.

The protein belongs to the IlvD/Edd family. Homodimer. The cofactor is [2Fe-2S] cluster. Requires Mg(2+) as cofactor.

The catalysed reaction is (2R)-2,3-dihydroxy-3-methylbutanoate = 3-methyl-2-oxobutanoate + H2O. It catalyses the reaction (2R,3R)-2,3-dihydroxy-3-methylpentanoate = (S)-3-methyl-2-oxopentanoate + H2O. It functions in the pathway amino-acid biosynthesis; L-isoleucine biosynthesis; L-isoleucine from 2-oxobutanoate: step 3/4. Its pathway is amino-acid biosynthesis; L-valine biosynthesis; L-valine from pyruvate: step 3/4. Functions in the biosynthesis of branched-chain amino acids. Catalyzes the dehydration of (2R,3R)-2,3-dihydroxy-3-methylpentanoate (2,3-dihydroxy-3-methylvalerate) into 2-oxo-3-methylpentanoate (2-oxo-3-methylvalerate) and of (2R)-2,3-dihydroxy-3-methylbutanoate (2,3-dihydroxyisovalerate) into 2-oxo-3-methylbutanoate (2-oxoisovalerate), the penultimate precursor to L-isoleucine and L-valine, respectively. The chain is Dihydroxy-acid dehydratase from Nocardioides sp. (strain ATCC BAA-499 / JS614).